The sequence spans 504 residues: MSNPPTYTTSQGCPVSDAFSTQRISGTKISIKTPVGPLLLQDFKFLDSLAHFDRERIPERVVHAKGAGAYGVFEVTEDISDICSAKFLDTVGKKTKIFTRFSTVGGEKGSSDSARDPRGFATKFYTEEGNLDLVYNNTPIFFIRDPTKFPHFIHTQKRNPATNCKDANMFWDYLTNNPESLHQIMYLFSNRGTPTSYRKMNGYSGHSYKWYNAKGEWVSSVHFISNQGVHNMTDEEAGDLSGKDPDFQTMDLYKAIEQGDYPSWECYVQTMTLEEAKKQPFSVYDLTKVWPHKDFPLRHFGKFTLNENAQNYFAEVEQAAFSPSHTVPGMEPSNDPVLQSRLFSYPDTHRHRLGVNYSQIPVNCPMRAVFAPQIRDGSMMVNGNLGGTPNYAGAYNCPVQYQAPIKASSKTPEEQYEGETLSYDWTEVNEYDFYQPGRFWEVLGKTKGEQEALVHNVANHVSGADEFIQDRVFAYFSKANPVIGDLIRKEVLKKSPRGASKNKF.

Catalysis depends on residues H63 and N136. A heme-binding site is contributed by Y345. Residues N502 to F504 carry the Microbody targeting signal motif.

The protein belongs to the catalase family. Heme serves as cofactor.

The protein localises to the peroxisome matrix. It catalyses the reaction 2 H2O2 = O2 + 2 H2O. Catalyzes the degradation of hydrogen peroxide (H(2)O(2)) generated by peroxisomal oxidases to water and oxygen, thereby protecting cells from the toxic effects of hydrogen peroxide. The chain is Peroxisomal catalase (CTA1) from Candida boidinii (Yeast).